We begin with the raw amino-acid sequence, 580 residues long: MSQDNATGAAAASTSNFLRQIIDTDLEQGTYAGRQDTAGHALPPIITRFPPEPNGYLHIGHAKSIWVNFGLAKEYGGRCHLRFDDTNPVKEDTEYVDSIIDAVHWLGYSWQNGTGEHLYYASDYFEQLYGFAEVLIQRGAAYIDSQSAEQIAANRGDFTRPGTPSPFRDRSVEENLALFRDMRAGKYQDGQHVLRARIDMAAPNIVMRDPVLYRIRHAHHHRTGDAWCIYPMYDFTHCISDALENITHSLCTLEFENNRPLYDWVLDHLRDAGALPAPLPHQYEFARLHLTYAITSKRKLLQLVNEKRVDGWDDPRMPTLVGIRRRGYTPESIQLFCERVGVSKADSWIDMSILEAAVRDDLDARAPRSVAVLDPVKLILDNVPADFNEPCSAPVHPKQPELGRREFPLTRELWIEREDFTETPPKGYFRLFPGNKVRLRYGYVIECTGCDKDADGNITAVHANIIPDTKSGTPGADSVKVKGNIHWVSAAHALEAEVRLYDRLFTDPQPDSGDKNFLDALNPDAKRVVTAYLEPTLATAKPEDRFQFERHGYFVADRIDSQPGKPVFNRVVGLKDSWGK.

The 'HIGH' region signature appears at 51–61; the sequence is PEPNGYLHIGH. Residues 52–54 and 58–64 contribute to the ATP site; these read EPN and HIGHAKS. Positions 84 and 233 each coordinate L-glutamine. ATP-binding positions include Thr-252 and 287–288; that span reads RL. Positions 294-298 match the 'KMSKS' region motif; that stretch reads ITSKR.

Belongs to the class-I aminoacyl-tRNA synthetase family. In terms of assembly, monomer.

The protein resides in the cytoplasm. It carries out the reaction tRNA(Gln) + L-glutamine + ATP = L-glutaminyl-tRNA(Gln) + AMP + diphosphate. The sequence is that of Glutamine--tRNA ligase from Ralstonia nicotianae (strain ATCC BAA-1114 / GMI1000) (Ralstonia solanacearum).